A 268-amino-acid polypeptide reads, in one-letter code: Tryptophan synthase alpha chain (268 aa).

Active-site proton acceptor residues include Glu-49 and Asp-60.

Belongs to the TrpA family. As to quaternary structure, tetramer of two alpha and two beta chains.

The catalysed reaction is (1S,2R)-1-C-(indol-3-yl)glycerol 3-phosphate + L-serine = D-glyceraldehyde 3-phosphate + L-tryptophan + H2O. Its pathway is amino-acid biosynthesis; L-tryptophan biosynthesis; L-tryptophan from chorismate: step 5/5. Its function is as follows. The alpha subunit is responsible for the aldol cleavage of indoleglycerol phosphate to indole and glyceraldehyde 3-phosphate. In Salmonella paratyphi A (strain ATCC 9150 / SARB42), this protein is Tryptophan synthase alpha chain.